The following is a 476-amino-acid chain: Ureidoglycolate hydrolase (476 aa).

The signal sequence occupies residues 1 to 25 (MESLKRFLCSIALLLISLLLPSSLA). 4 residues coordinate Mn(2+): H138, D149, E184, and H254. Residues 183–184 (EE), 254–257 (HIEQ), H290, N340, R353, 423–424 (YH), and H448 each bind substrate. An involved in dimerization region spans residues 276 to 391 (APASLKVEFE…LSEFKIVNQD (116 aa)). H448 contacts Mn(2+).

The protein belongs to the peptidase M20 family. As to quaternary structure, homodimer. The cofactor is Mn(2+). It depends on Ni(2+) as a cofactor. Co(2+) serves as cofactor.

Its subcellular location is the endoplasmic reticulum. The catalysed reaction is (S)-ureidoglycolate + H2O + 2 H(+) = glyoxylate + 2 NH4(+) + CO2. It participates in nitrogen metabolism; (S)-allantoin degradation; glyoxylate from (S)-ureidoglycolate: step 1/1. In terms of biological role, involved in the catabolism of purine nucleotides. Can use (S)-ureidoglycolate as substrate, but not (R)-ureidoglycolate or allantoate. The sequential activity of AAH, UGLYAH and UAH allows a complete purine breakdown without the intermediate generation of urea. This chain is Ureidoglycolate hydrolase, found in Arabidopsis thaliana (Mouse-ear cress).